Consider the following 434-residue polypeptide: (3,5-dihydroxyphenyl)acetyl-CoA 1,2-dioxygenase (434 aa).

Substrate-binding positions include Asp-184, Glu-190, 223–226 (HPRY), 234–239 (AGINLK), Gly-293, 322–324 (IPG), and Gln-413.

The protein belongs to the enoyl-CoA hydratase/isomerase family. In terms of assembly, homohexamer; dimer of trimers.

The enzyme catalyses (3,5-dihydroxyphenyl)acetyl-CoA + O2 = 2-(3,5-dihydroxyphenyl)-2-oxoacetate + CoA + H(+). Involved in the biosynthesis of the nonproteinogenic amino acid monomer (S)-3,5-dihydroxyphenylglycine (Dpg) responsible of the production of vancomycin and teicoplanin antibiotics. Catalyzes the unusual conversion 3,5-dihydroxyphenylacetyl-CoA (DPA-CoA) to 3,5-dihydroxyphenylglyoxylate. DpgC performed a net four-electron oxidation of the benzylic carbon of DPA-CoA and the hydrolysis of the thioester bond to generate free CoA. It can also use phenylacetyl-CoA (PA-CoA) as substrate. The sequence is that of (3,5-dihydroxyphenyl)acetyl-CoA 1,2-dioxygenase (dpgC) from Amycolatopsis orientalis (Nocardia orientalis).